We begin with the raw amino-acid sequence, 122 residues long: Large ribosomal subunit protein uL14 (122 aa).

The protein belongs to the universal ribosomal protein uL14 family. In terms of assembly, part of the 50S ribosomal subunit. Forms a cluster with proteins L3 and L19. In the 70S ribosome, L14 and L19 interact and together make contacts with the 16S rRNA in bridges B5 and B8.

Functionally, binds to 23S rRNA. Forms part of two intersubunit bridges in the 70S ribosome. The chain is Large ribosomal subunit protein uL14 from Bradyrhizobium diazoefficiens (strain JCM 10833 / BCRC 13528 / IAM 13628 / NBRC 14792 / USDA 110).